We begin with the raw amino-acid sequence, 199 residues long: N-(5'-phosphoribosyl)anthranilate isomerase (199 aa).

Belongs to the TrpF family.

The catalysed reaction is N-(5-phospho-beta-D-ribosyl)anthranilate = 1-(2-carboxyphenylamino)-1-deoxy-D-ribulose 5-phosphate. Its pathway is amino-acid biosynthesis; L-tryptophan biosynthesis; L-tryptophan from chorismate: step 3/5. This is N-(5'-phosphoribosyl)anthranilate isomerase from Streptococcus pneumoniae (strain ATCC 700669 / Spain 23F-1).